We begin with the raw amino-acid sequence, 1796 residues long: MDPTFPRVVFFSNEFPSDDLKDLFRRLHQQSKDRRFKLLSIFLEESTAILKDEVAKLPRPLKELVPPFDSVLALANVDFRQGPLGAAMESSMLTILELGMFIGHYEAEDAEWDLVPSRTVLAGLSIGILAAAAVALSSSLADVAKNGAEGVRVSFRLGVYVADISTKLESPQPDGTLSSWAHVVTETTQAGVQDELDQFNADTQSPELTKVFVSAADKTSVSVSGPPSRIKAAFQHSPALRYSKSLPLPVYDGLCHASHLYTQNDIDAVINSAESVIQPNRSVRLALLSSQTGKPFAARTARELFLEIGTELLTGTIYLDNVTAGIVEHFQLDSETSGKCQIDSFRTSLVLRGIYSTVEAKFTKEQQQLIRRDLVCWVHKDFGPRRPHSHASSKLAIVGMACRLPGGANDLDLFWKLLEEGRDTHTTVPPDRFDLNTHYDPTGKTENATQTPFGNFIDRPGYFDAGFFNMSPREAEQTDPMQRLALVTAYEAMEMAGVVPGRTPSTHPSRIGTFYGQASDDWRELNASQNISTYAVPGGERAFANGRINYFFKFSGPSFNLDTACSSGLAAVQAACSALWAGEADTVIAGGLNVITDPDNYCGLGNAHFLSKTGQCKVWDKDADGYCRADGIGSVVIKRLEDAEADNDNILAVVLGARTNHSAEAISITHPHAGAQRANYRQVLHQAGVNPVDVSYIELHGTGTQAGDAVESESVSDVFAPVTPRRRPDQRLYLGAVKSNIGHGEAAAGIASLLKALLVYQKNMIPMHIGIKSEINPTIPKDLERRNVGLAMENTPWPRPAGKKRLAVVNSFGAHGGNTTLLLEDAPERVKAQSTEDRITHPVLISAKSKKSLQANMESLLSYLDQHPETSLADLAYTTSSRRMHHSMRFGTAVSCIPALQKALRSQLCNPNFASEMRPIPNEAPSVVLAFTGQGAYYSGMGRELFIEFPYFRAQVQQLDRLAQRLGFPSVVPVIDGSIEDSPASPILTQLSVVILEIALARFWSLLGVSISAVIGHSLGEYAALAVAGVISAADALYLVGRRAQLVEERCTPGSHSMLSVRASEDAIQEMLASEPETAAIAYEVSCCNTYQDTVIGGLKDEINNIRMALEAKSIKCTLLDVPYAFHTAQMDSILDGLEALAMPVPFKAPSIPVLSPLLATAVFDVKSFNANYLRRATRETVDFAAAIEAAQDMGLVDTKTIWVDVGPHPICAGLVRGMIPSASVVSSCRRNEDSIATISKSLVTLHLAGLTPFWAEFFRPRECEYSLLHLPKYRWNETDYWIPYIGTWTLDKAHLKHGTKPTPFSLSMSRPSALRTSLVHQITAETVEATTATLHTISDMQHPDFLEAIHGHTMNKCGVATSSIWSDMAFTVGEYLYRRLVPNVKDVHMNLADVEVLHAQVAGKTKGSVQPLVLQAHLDLSTNSMSLAWFNADGETGECAAESFATATVRFEDPVAWKKEWARLTHLVRGRIEALEQRAAEGKASRLSKPLAYALFKNVVDYADRYRGMDSVVLDELEAMAEVTLVPERHGTWHTPPHWIDSVSHLAGLVMNGSDASNTRDYFFVTPGCDSFRLLNKLEPGVRYRSYVRMFPLPEDPNMHGGDVYILQGEEIVGMVGMIRFRRVPRLLMDRFFSPPTTTSVAGPAPPVAAATAKGHNVIPTTPAVPTPAPAIATSNPIVNSAIAYKTPESTPPLAPSSESSTPKESPIATPPESERADPMDNMVSQCLRLMARETGLEVEALTGDASFVQLGVDSLMSLVLSEKFRAELGVEIKSSLFLECPTIGEMTAWIEEYC.

Residues 18-256 form an N-terminal acylcarrier protein transacylase domain (SAT) region; the sequence is DDLKDLFRRL…PLPVYDGLCH (239 aa). The Ketosynthase family 3 (KS3) domain maps to 392–825; sequence SSKLAIVGMA…GGNTTLLLED (434 aa). Residues C565, H700, and H743 each act as for beta-ketoacyl synthase activity in the active site. The tract at residues 931 to 1251 is malonyl-CoA:ACP transacylase (MAT) domain; sequence FTGQGAYYSG…SLVTLHLAGL (321 aa). A product template (PT) domain region spans residues 1317–1636; it reads TSLVHQITAE…RLLMDRFFSP (320 aa). The segment at 1321-1457 is N-terminal hotdog fold; sequence HQITAETVEA…ATVRFEDPVA (137 aa). The 311-residue stretch at 1321 to 1631 folds into the PKS/mFAS DH domain; that stretch reads HQITAETVEA…FRRVPRLLMD (311 aa). H1353 (proton acceptor; for dehydratase activity) is an active-site residue. The C-terminal hotdog fold stretch occupies residues 1485 to 1631; that stretch reads ASRLSKPLAY…FRRVPRLLMD (147 aa). D1542 (proton donor; for dehydratase activity) is an active-site residue. The segment at 1688-1720 is disordered; it reads TPESTPPLAPSSESSTPKESPIATPPESERADP. A compositionally biased stretch (low complexity) spans 1697–1708; sequence PSSESSTPKESP. Residues 1719–1796 form the Carrier domain; that stretch reads DPMDNMVSQC…EMTAWIEEYC (78 aa). S1756 carries the O-(pantetheine 4'-phosphoryl)serine modification.

It depends on pantetheine 4'-phosphate as a cofactor.

It participates in secondary metabolite biosynthesis. In terms of biological role, non-reducing polyketide synthase; part of the gene cluster that mediates the biosynthesis of neosartoricin B, a prenylated anthracenone that probably exhibits T-cell antiproliferative activity, suggestive of a physiological role as an immunosuppressive agent. The non-reducing polyketide synthase nscA probably synthesizes and cyclizes the decaketide backbone. The hydrolase nscB then mediates the product release through hydrolysis followed by spontaneous decarboxylation. The prenyltransferase nscD catalyzes the addition of the dimethylallyl group to the aromatic C5. The FAD-dependent monooxygenase nscC is then responsible for the stereospecific hydroxylation at C2. Neosartoricin B can be converted into two additional compounds neosartoricins C and D. Neosartoricin C is a spirocyclic compound that is cyclized through the attack of C3 hydroxyl on C14, followed by dehydration. On the other hand, neosartoricin D is a further cyclized compound in which attack of C2 on C14 in neosartoricin C results in the formation of the acetal-containing dioxabicyclo-octanone ring. Both of these compounds are novel and possibly represent related metabolites of the gene cluster. This chain is Non-reducing polyketide synthase nscA, found in Arthroderma otae (strain ATCC MYA-4605 / CBS 113480) (Microsporum canis).